The following is a 421-amino-acid chain: NADP(+)-dependent glutamate dehydrogenase (421 aa).

The substrate site is built by Lys-70 and Lys-94. The active-site Proton donor is Lys-106. NADP(+)-binding residues include Thr-190 and Asn-221. Residue Ser-354 participates in substrate binding.

It belongs to the Glu/Leu/Phe/Val dehydrogenases family. Homohexamer.

The enzyme catalyses L-glutamate + NADP(+) + H2O = 2-oxoglutarate + NH4(+) + NADPH + H(+). Is not regulated allosterically. Activity is inhibited in the presence of high ionic strength; the inhibitory effect of KCl is slightly higher than that of NaCl. Its function is as follows. Catalyzes the reversible oxidative deamination of L-glutamate to 2-oxoglutarate and ammonia, thereby playing a key role at the intersection of the carbon and nitrogen metabolic pathways. Shows a high preference for NADP(+)/NADPH as the acceptor/donor over NAD(+)/NADH. May function in vivo in the synthetic direction. Also catalyzes at very low rates the oxidative deamination of L-2-aminobutyrate, and the reductive amination of 2-oxovalerate and 2-oxobutyrate. The sequence is that of NADP(+)-dependent glutamate dehydrogenase from Pyrobaculum calidifontis (strain DSM 21063 / JCM 11548 / VA1).